The sequence spans 472 residues: Protein PIN-LIKES 1 (472 aa).

Topologically, residues 1–93 are lumenal; the sequence is MSLTQSAKLH…FYSMRMRLLD (93 aa). A helical membrane pass occupies residues 94–114; sequence LFITSSIPVAKILLITGIGFY. At 115–133 the chain is on the cytoplasmic side; the sequence is LALDQVNILNHDARKQLNN. Residues 134–154 form a helical membrane-spanning segment; the sequence is IVFYVFSPSLVASSLSETITY. Topologically, residues 155–161 are lumenal; the sequence is ESMVKMW. A helical transmembrane segment spans residues 162–182; it reads FMPLNVLLTFIIGSFLGWIVI. Residues 183–193 lie on the Cytoplasmic side of the membrane; that stretch reads KITKPPSHLRG. Residues 194 to 214 form a helical membrane-spanning segment; sequence IIVGCCAAGNLGNMPLIIIPA. Over 215-231 the chain is Lumenal; sequence ICNEKGSPFGDPESCEK. Residues 232–252 traverse the membrane as a helical segment; the sequence is FGLGYIALSMAIGAIYIWTYV. Residues 253–309 are Cytoplasmic-facing; sequence YNLMRMLANPAGETAINSTSSTMPLISPKVEVAEQVGTWGKVKQRVCSVAEKINLRT. The helical transmembrane segment at 310 to 330 threads the bilayer; it reads IFAPSTIAALIALAVGLNPLL. The Lumenal portion of the chain corresponds to 331–347; that stretch reads RKLLVGNTAPLRVIEDS. Residues 348 to 368 form a helical membrane-spanning segment; that stretch reads VSLLGDGAIPVLTLIVGGNLL. Over 369 to 379 the chain is Cytoplasmic; it reads NGLRGSGINKS. Residues 380-400 form a helical membrane-spanning segment; that stretch reads VIMGVVVVRYLLLPILGVFIV. At 401–413 the chain is on the lumenal side; that stretch reads RGAHYLGLVTSEP. The chain crosses the membrane as a helical span at residues 414-434; the sequence is LYQFVLLLQYVVPPAMNLGTI. Over 435 to 446 the chain is Cytoplasmic; it reads TQLFGSGESECS. Residues 447 to 467 traverse the membrane as a helical segment; sequence VILFWSYALASVSLTVWPTFF. The Lumenal segment spans residues 468 to 472; it reads MWLVA.

Belongs to the auxin efflux carrier (TC 2.A.69.2) family. In terms of tissue distribution, expressed in flowers.

The protein localises to the endoplasmic reticulum membrane. Functionally, involved in cellular auxin homeostasis by regulating auxin metabolism. Regulates intracellular auxin accumulation at the endoplasmic reticulum and thus auxin availability for nuclear auxin signaling. This chain is Protein PIN-LIKES 1, found in Arabidopsis thaliana (Mouse-ear cress).